A 97-amino-acid chain; its full sequence is MKEPGPNFVTVRKGLHSFKMAFVKHLLLFLSPRLECSGSITDHCSLHLPVQEILMSQPPEQLGLQTNLGNQESSGMMKLFMPRPKVLAQYESIQFMP.

Expressed in numerous tissues; not found in breast, heart, small intestine and liver. Isoform 1: Predominantly expressed in the testis. Isoform 3: Predominantly expressed in the testis, at lower level in the placenta, during malignant progression of melanocytic tumors and in several tumors of varying origins. Isoform 4: Predominantly expressed in the testis, at lower level in the placenta, during malignant progression of melanocytic tumors and in several tumors of varying origins. Isoform 5: Predominantly expressed in the testis. Isoform 6: Predominantly expressed in the testis.

The protein is Down syndrome critical region protein 8 of Homo sapiens (Human).